Here is a 250-residue protein sequence, read N- to C-terminus: Proteasome subunit alpha type-7-like (250 aa).

The O-linked (GlcNAc) serine glycan is linked to S132.

Belongs to the peptidase T1A family. As to quaternary structure, the 26S proteasome consists of a 20S proteasome core and two 19S regulatory subunits. The 20S proteasome core is a barrel-shaped complex made of 28 subunits that are arranged in four stacked rings. The two outer rings are each formed by seven alpha subunits, and the two inner rings are formed by seven beta subunits. The proteolytic activity is exerted by three beta-subunits PSMB5, PSMB6 and PSMB7. PSMA7 interacts directly with the PSMG1-PSMG2 heterodimer which promotes 20S proteasome assembly. Interacts with HIF1A. Interacts with RAB7A. Interacts with PRKN. Interacts with ABL1 and ABL2. Interacts with EMAP2. Interacts with MAVS.

Its subcellular location is the cytoplasm. It is found in the nucleus. Component of the 20S core proteasome complex involved in the proteolytic degradation of most intracellular proteins. This complex plays numerous essential roles within the cell by associating with different regulatory particles. Associated with two 19S regulatory particles, forms the 26S proteasome and thus participates in the ATP-dependent degradation of ubiquitinated proteins. The 26S proteasome plays a key role in the maintenance of protein homeostasis by removing misfolded or damaged proteins that could impair cellular functions, and by removing proteins whose functions are no longer required. Associated with the PA200 or PA28, the 20S proteasome mediates ubiquitin-independent protein degradation. This type of proteolysis is required in several pathways including spermatogenesis (20S-PA200 complex) or generation of a subset of MHC class I-presented antigenic peptides (20S-PA28 complex). Inhibits the transactivation function of HIF-1A under both normoxic and hypoxia-mimicking conditions. The interaction with EMAP2 increases the proteasome-mediated HIF-1A degradation under the hypoxic conditions. Plays a role in hepatitis C virus internal ribosome entry site-mediated translation. Mediates nuclear translocation of the androgen receptor (AR) and thereby enhances androgen-mediated transactivation. Promotes MAVS degradation and thereby negatively regulates MAVS-mediated innate immune response. This is Proteasome subunit alpha type-7-like (PSMA7L) from Macaca fascicularis (Crab-eating macaque).